The primary structure comprises 308 residues: Flavonol synthase 3 (308 aa).

The Fe2OG dioxygenase domain occupies 167 to 267; sequence TIEYLMKINY…RISWPVFVES (101 aa). 2-oxoglutarate is bound at residue 175–177; the sequence is NYY. Residues histidine 192, aspartate 194, and histidine 248 each contribute to the Fe cation site. 2-oxoglutarate is bound at residue 258-260; sequence RIS.

The protein belongs to the iron/ascorbate-dependent oxidoreductase family. Requires Fe(2+) as cofactor. As to expression, widely expressed at low levels.

It carries out the reaction a (2R,3R)-dihydroflavonol + 2-oxoglutarate + O2 = a flavonol + succinate + CO2 + H2O. The protein operates within secondary metabolite biosynthesis; flavonoid biosynthesis. Functionally, catalyzes the formation of flavonols from dihydroflavonols. Possesses low activity in vitro towards dihydrokaempferol and dihydroquercetin producing kaempferol and quercitin, respectively. This chain is Flavonol synthase 3, found in Arabidopsis thaliana (Mouse-ear cress).